The primary structure comprises 579 residues: Glutamate--tRNA ligase (579 aa).

The 'HIGH' region signature appears at 114-124 (PNPNGPWHIGH).

It belongs to the class-I aminoacyl-tRNA synthetase family. Glutamate--tRNA ligase type 2 subfamily.

The protein localises to the cytoplasm. The enzyme catalyses tRNA(Glu) + L-glutamate + ATP = L-glutamyl-tRNA(Glu) + AMP + diphosphate. Functionally, catalyzes the attachment of glutamate to tRNA(Glu) in a two-step reaction: glutamate is first activated by ATP to form Glu-AMP and then transferred to the acceptor end of tRNA(Glu). In Haloarcula marismortui (strain ATCC 43049 / DSM 3752 / JCM 8966 / VKM B-1809) (Halobacterium marismortui), this protein is Glutamate--tRNA ligase.